The primary structure comprises 118 residues: V-type proton ATPase subunit G 2 (118 aa).

Residues 23–90 (ADARKRKARR…VQGMQSSQQR (68 aa)) are disordered. The span at 35 to 55 (QAKEEAQMEVEQYRREREQEF) shows a compositional bias: basic and acidic residues. Composition is skewed to polar residues over residues 56–69 (QSKQQAAMGSQGNL) and 78–89 (RRQVQGMQSSQQ).

Belongs to the V-ATPase G subunit family. As to quaternary structure, V-ATPase is a heteromultimeric enzyme made up of two complexes: the ATP-hydrolytic V1 complex and the proton translocation V0 complex. The V1 complex consists of three catalytic AB heterodimers that form a heterohexamer, three peripheral stalks each consisting of EG heterodimers, one central rotor including subunits D and F, and the regulatory subunits C and H. The proton translocation complex V0 consists of the proton transport subunit a, a ring of proteolipid subunits c9c'', rotary subunit d, subunits e and f, and the accessory subunits ATP6AP1/Ac45 and ATP6AP2/PRR.

Its subcellular location is the melanosome. It localises to the cytoplasmic vesicle. The protein resides in the clathrin-coated vesicle membrane. In terms of biological role, subunit of the V1 complex of vacuolar(H+)-ATPase (V-ATPase), a multisubunit enzyme composed of a peripheral complex (V1) that hydrolyzes ATP and a membrane integral complex (V0) that translocates protons. V-ATPase is responsible for acidifying and maintaining the pH of intracellular compartments and in some cell types, is targeted to the plasma membrane, where it is responsible for acidifying the extracellular environment. This chain is V-type proton ATPase subunit G 2 (ATP6V1G2), found in Macaca mulatta (Rhesus macaque).